The chain runs to 290 residues: Arylamine N-acetyltransferase, pineal gland isozyme NAT-3 (290 aa).

Cys-68 acts as the Acyl-thioester intermediate in catalysis. Catalysis depends on residues His-107 and Asp-122.

This sequence belongs to the arylamine N-acetyltransferase family.

It catalyses the reaction an arylamine + acetyl-CoA = an N-acetylarylamine + CoA. The catalysed reaction is an N-hydroxyarylamine + acetyl-CoA = an N-acetoxyarylamine + CoA. Its function is as follows. Catalyzes the N- or O-acetylation of various arylamine and heterocyclic amine substrates, and participates in the detoxification of a plethora of hydrazine and arylamine drugs. The polypeptide is Arylamine N-acetyltransferase, pineal gland isozyme NAT-3 (Gallus gallus (Chicken)).